A 229-amino-acid polypeptide reads, in one-letter code: Cytochrome c oxidase subunit 2 (229 aa).

Topologically, residues 1–26 (MATWAQFGLQDASSPLMEELTYFHDY) are mitochondrial intermembrane. A helical transmembrane segment spans residues 27–48 (ALIVLTLITILVFYGLVSLLLS). Residues 49–62 (SSTNRFFLEGQELE) lie on the Mitochondrial matrix side of the membrane. Residues 63–82 (TIWTVVPAFILIFIALPSLQ) traverse the membrane as a helical segment. The Mitochondrial intermembrane segment spans residues 83-229 (LLYLMDEVNN…ENWVAQYIEE (147 aa)). H161, C196, E198, C200, H204, and M207 together coordinate Cu cation. E198 contacts Mg(2+).

Belongs to the cytochrome c oxidase subunit 2 family. In terms of assembly, component of the cytochrome c oxidase (complex IV, CIV), a multisubunit enzyme composed of a catalytic core of 3 subunits and several supernumerary subunits. The complex exists as a monomer or a dimer and forms supercomplexes (SCs) in the inner mitochondrial membrane with ubiquinol-cytochrome c oxidoreductase (cytochrome b-c1 complex, complex III, CIII). Requires Cu cation as cofactor.

Its subcellular location is the mitochondrion inner membrane. The enzyme catalyses 4 Fe(II)-[cytochrome c] + O2 + 8 H(+)(in) = 4 Fe(III)-[cytochrome c] + 2 H2O + 4 H(+)(out). In terms of biological role, component of the cytochrome c oxidase, the last enzyme in the mitochondrial electron transport chain which drives oxidative phosphorylation. The respiratory chain contains 3 multisubunit complexes succinate dehydrogenase (complex II, CII), ubiquinol-cytochrome c oxidoreductase (cytochrome b-c1 complex, complex III, CIII) and cytochrome c oxidase (complex IV, CIV), that cooperate to transfer electrons derived from NADH and succinate to molecular oxygen, creating an electrochemical gradient over the inner membrane that drives transmembrane transport and the ATP synthase. Cytochrome c oxidase is the component of the respiratory chain that catalyzes the reduction of oxygen to water. Electrons originating from reduced cytochrome c in the intermembrane space (IMS) are transferred via the dinuclear copper A center (CU(A)) of subunit 2 and heme A of subunit 1 to the active site in subunit 1, a binuclear center (BNC) formed by heme A3 and copper B (CU(B)). The BNC reduces molecular oxygen to 2 water molecules using 4 electrons from cytochrome c in the IMS and 4 protons from the mitochondrial matrix. This Paracentrotus lividus (Common sea urchin) protein is Cytochrome c oxidase subunit 2 (COII).